The chain runs to 214 residues: Nigrelysin (214 aa).

The first 21 residues, 1-21, serve as a signal peptide directing secretion; the sequence is MKNRLVIIVFMVVTMLCASLA. The propeptide occupies 22–35; sequence LPLEEKEDEKDEKR. The tract at residues 38-47 is plays an important role in the hemolytic activity; sequence EVAGAVMEGA. The interval 46–65 is N-terminal region; sequence GANLGMSVLQTILQAIGDVS. Positions 89, 122, 140, 142, 168, 172, and 173 each coordinate phosphocholine. The trp-rich region, which is important for the binding to lipid membrane stretch occupies residues 140 to 155; it reads SVPYDYNWYSNWWNVK. Residues 179 to 181 carry the Cell attachment site, crucial for protein stability motif; it reads KGD.

The protein belongs to the actinoporin family. Sea anemone subfamily. As to quaternary structure, octamer or nonamer in membranes. Monomer in the soluble state.

The protein resides in the secreted. It localises to the nematocyst. The protein localises to the target cell membrane. Pore-forming protein that forms cation-selective hydrophilic pores in cell membranes and causes cytolysis. Pore formation is a multi-step process that involves specific recognition of membrane sphingomyelin (but neither cholesterol nor phosphatidylcholine) using aromatic rich region and adjacent phosphocholine (POC) binding site, firm binding to the membrane (mainly driven by hydrophobic interactions) accompanied by the transfer of the N-terminal region to the lipid-water interface and finally pore formation after oligomerization of monomers. This protein shows potent hemolytic activity (EC(50)=0.09 nM), as well as potent cytotoxic activity on nucleated cells (L1210 cells). The cytotoxic process starts with cellular swelling that is time and dose dependent and occurs up to a critical volume, probably due to influx of water via pores opened by this actinoporin. The second phase consists of the final loss of membrane integrity that leads to cytolysis. The chain is Nigrelysin from Anthopleura nigrescens (Sea anemone).